A 174-amino-acid polypeptide reads, in one-letter code: NADH-ubiquinone oxidoreductase chain 6 (174 aa).

4 consecutive transmembrane segments (helical) span residues 25–45, 48–68, 82–102, and 143–163; these read SMGLMLLIQTFLTCLITSIYV, FWFSYVLFLIFLGGMLILFIY, FSLTLISLIIFSIFTIVFFMI, and LITLLLINYLFLTLLVTVKIT.

Belongs to the complex I subunit 6 family.

The protein localises to the mitochondrion membrane. The catalysed reaction is a ubiquinone + NADH + 5 H(+)(in) = a ubiquinol + NAD(+) + 4 H(+)(out). Core subunit of the mitochondrial membrane respiratory chain NADH dehydrogenase (Complex I) that is believed to belong to the minimal assembly required for catalysis. Complex I functions in the transfer of electrons from NADH to the respiratory chain. The immediate electron acceptor for the enzyme is believed to be ubiquinone. The protein is NADH-ubiquinone oxidoreductase chain 6 (ND6) of Anopheles albimanus (New world malaria mosquito).